A 461-amino-acid chain; its full sequence is Trimethylamine monooxygenase (461 aa).

Ser-14, Glu-39, Lys-40, Gln-41, Met-47, Trp-48, and His-64 together coordinate FAD. Residues Trp-72 and Asn-74 each contribute to the NADP(+) site. The FAD site is built by Asn-74 and Ala-127. Ser-206, Ser-207, Ser-209, Arg-230, and Thr-231 together coordinate NADP(+). Residues Gln-319 and Thr-322 each coordinate FAD. Arg-413 is an NADP(+) binding site.

It belongs to the FMO family. FAD serves as cofactor.

It catalyses the reaction trimethylamine + NADPH + O2 = trimethylamine N-oxide + NADP(+) + H2O. Catalyzes the oxidation of trimethylamine (TMA) to produce trimethylamine N-oxide (TMAO). The produced TMAO is accumulated in the cell, functioning as a piezolyte, improving both growth and survival at high hydrostatic pressure (HHP). This is Trimethylamine monooxygenase from Myroides profundi.